The chain runs to 365 residues: Putative glutamate--cysteine ligase 2-2 (365 aa).

Belongs to the glutamate--cysteine ligase type 2 family. YbdK subfamily.

The catalysed reaction is L-cysteine + L-glutamate + ATP = gamma-L-glutamyl-L-cysteine + ADP + phosphate + H(+). In terms of biological role, ATP-dependent carboxylate-amine ligase which exhibits weak glutamate--cysteine ligase activity. The chain is Putative glutamate--cysteine ligase 2-2 from Mycolicibacterium vanbaalenii (strain DSM 7251 / JCM 13017 / BCRC 16820 / KCTC 9966 / NRRL B-24157 / PYR-1) (Mycobacterium vanbaalenii).